Reading from the N-terminus, the 2269-residue chain is Anaphase-promoting complex subunit 1 (2269 aa).

Disordered stretches follow at residues 305-334, 379-433, 609-644, 804-845, and 1136-1197; these read PSSNAENDNTNNNNNNNNTNTNISNNQTIN, SSPP…QENS, NNNNNNNNNNNNNNNNNNNNNNNNNNNNNNNKRKPL, KVYP…NNNN, and STAS…NSTS. Composition is skewed to low complexity over residues 306–334, 379–430, 609–638, 809–845, and 1136–1159; these read SSNAENDNTNNNNNNNNTNTNISNNQTIN, SSPP…QQQQ, NNNNNNNNNNNNNNNNNNNNNNNNNNNNNN, NNNNNNNNNNNNNNNNNNNNNNNNNNNNNNNNNNNNN, and STASSSSNEMNSNSNITSINGQSN. Over residues 1160 to 1177 the composition is skewed to polar residues; that stretch reads GLPMNSTTNQMNSHQINN. PC repeat units follow at residues 1440 to 1472 and 1483 to 1520; these read AALMGIGLLYCQTSNRRMTEVLLMEIGRKPIND and TAGMALGLVNLGKGANEGSLTDLHVEDRLRSFIGISKE. Residues 1535–1586 form a disordered region; it reads STPSISSNRNNNDLFNNGSNNNSSSNGGGGGGGGNNNGNNSNNGNNGSSQFK. Positions 1540-1559 are enriched in low complexity; that stretch reads SSNRNNNDLFNNGSNNNSSS. The span at 1560–1570 shows a compositional bias: gly residues; it reads NGGGGGGGGNN. The span at 1571-1583 shows a compositional bias: low complexity; sequence NGNNSNNGNNGSS. PC repeat units lie at residues 1605–1637, 1722–1756, and 1792–1807; these read GAIIALSLIYLKTNNLKISNYLSIPDTTFGLNY, GAAFSIGLKYAGSLNENAFSLLMDLIQLFRKRQVY, and LVMAGSGNLETLKILR. The segment covering 1960 to 1993 has biased composition (low complexity); that stretch reads NNNNNNNNNNNNNNNNNNNNNNNNNNNNNNNNNN. The disordered stretch occupies residues 1960 to 1997; that stretch reads NNNNNNNNNNNNNNNNNNNNNNNNNNNNNNNNNNKNIL.

Belongs to the APC1 family. As to quaternary structure, the APC/C is composed of at least 13 subunits that stay tightly associated throughout the cell cycle: anapc1, anapc2, anapc3, anapc4, anapc5, anapc6, anapc7, anapc8, anapc10, anapc11, cdc20, cdc26 and cdh1.

The protein resides in the nucleus. The protein operates within protein modification; protein ubiquitination. Functionally, component of the anaphase promoting complex/cyclosome (APC/C), a cell cycle-regulated E3 ubiquitin-protein ligase complex that controls progression through mitosis and the G1 phase of the cell cycle. The polypeptide is Anaphase-promoting complex subunit 1 (anapc1) (Dictyostelium discoideum (Social amoeba)).